The following is a 123-amino-acid chain: Cliotide T12 (123 aa).

An N-terminal signal peptide occupies residues 1-28 (MASLRIAPLALFFFLAASVMFTVEKTEA). The cyclopeptide (Gly-Asp) cross-link spans 29–58 (GIPCGESCVFIPCITGAIGCSCKSKVCYRD). 3 disulfides stabilise this stretch: Cys-32/Cys-48, Cys-36/Cys-50, and Cys-41/Cys-55. The propeptide at 59–123 (HVIAAEAKTM…KDHLKMSVPN (65 aa)) is removed in mature form.

Contains 3 disulfide bonds. Post-translationally, this is a cyclic peptide.

Functionally, probably participates in a plant defense mechanism. The protein is Cliotide T12 of Clitoria ternatea (Butterfly pea).